Reading from the N-terminus, the 178-residue chain is MDRPGPGSARPGRTVHVWGYRVEWKVRNGRKLQPSEWAGRGDLGGFKRRWKDTRATVGTTFRRRSRVSLVGELSKFPLPSDSSGGKSSSSFARGALAWCRQRNPNPSCAAAETGARTSLPKERCRGWRLGNWLHKHPHPNTCPRLPACWLPPILTERGERVPKLVPLLACYPKSKPKD.

The DNA-binding element occupies 8–50 (SARPGRTVHVWGYRVEWKVRNGRKLQPSEWAGRGDLGGFKRRW).

The protein resides in the nucleus. Functionally, DNA-binding protein involved in S phase checkpoint control-coupled apoptosis by mediating p53/TP53-induced apoptosis. Has the ability to inhibit DNA synthesis and S phase arrest coupled to apoptosis. Has affinity to both double- and single-stranded DNA. This Homo sapiens (Human) protein is Killin (KLLN).